A 194-amino-acid chain; its full sequence is AN1-type zinc finger protein 2A (194 aa).

AN1-type zinc fingers lie at residues 4 to 52 and 94 to 142; these read PDLG…QKDV and KIFT…RPTI. Positions 10, 15, 25, 28, 33, 36, 42, 44, 100, 105, 115, 118, 123, 126, 132, and 134 each coordinate Zn(2+). Residues 145–164 are disordered; the sequence is GCSPVTASESKPSGDPHPGS.

It localises to the cytoplasm. Its subcellular location is the nucleus. The chain is AN1-type zinc finger protein 2A (ZFAND2A) from Pongo abelii (Sumatran orangutan).